A 26-amino-acid polypeptide reads, in one-letter code: MLKYIYMHLSHKYNHILFTYNTRIIS.

The protein belongs to the asfivirus E66L family.

This is an uncharacterized protein from Ornithodoros (relapsing fever ticks).